A 441-amino-acid polypeptide reads, in one-letter code: EMI domain-containing protein 1 (441 aa).

Positions 1-22 (MGGPRAWALLCLGLLLPGGGAA) are cleaved as a signal peptide. An EMI domain is found at 33 to 106 (RRNWCSYVVT…PGHSGVSCEE (74 aa)). 3 disulfide bridges follow: Cys-37/Cys-96, Cys-62/Cys-68, and Cys-95/Cys-104. O-linked (Fuc) threonine glycosylation is present at Thr-42. An N-linked (GlcNAc...) asparagine glycan is attached at Asn-51. Residue Asn-136 is glycosylated (N-linked (GlcNAc...) asparagine). Disordered regions lie at residues 162 to 371 (QPVP…KSHW) and 405 to 441 (SGAG…DERG). 2 stretches are compositionally biased toward pro residues: residues 163–184 (PVPP…PPAQ) and 222–231 (PPGPQGPPGS). One can recognise a Collagen-like domain in the interval 179–368 (GPPPAQGSPG…PGPKGDPGEK (190 aa)). Over residues 232–243 (PGRAGAVGTPGE) the composition is skewed to low complexity. Positions 244–264 (RGPPGPPGPPGPPGPPAPVGP) are enriched in pro residues. Polar residues predominate over residues 277–288 (LSNTFTETNNHW). Over residues 292–311 (PTGPPGPPGPMGPPGPPGPT) the composition is skewed to pro residues. 2 stretches are compositionally biased toward basic and acidic residues: residues 335–344 (PGEKGERGLR) and 359–371 (PGPK…KSHW).

In terms of assembly, homo- or heteromers. O-fucosylated at Thr-42 within the EMI domain by FUT10/POFUT3 and FUT11/POFUT4.

The protein resides in the secreted. It localises to the extracellular space. It is found in the extracellular matrix. The protein is EMI domain-containing protein 1 (EMID1) of Homo sapiens (Human).